A 515-amino-acid polypeptide reads, in one-letter code: RNA exonuclease NGL2 (515 aa).

Disordered stretches follow at residues methionine 1 to isoleucine 54 and arginine 353 to glutamate 381. The segment covering glutamate 21–asparagine 34 has biased composition (basic and acidic residues). A compositionally biased stretch (basic residues) spans glutamine 40 to lysine 52. Basic and acidic residues predominate over residues lysine 369 to glutamate 381.

This sequence belongs to the CCR4/nocturin family.

Its subcellular location is the cytoplasm. The protein localises to the nucleus. In terms of biological role, involved in pre-rRNA processing. Required for the final stage of 3'-end maturation of 5.8S rRNA at site E. This is RNA exonuclease NGL2 (NGL2) from Saccharomyces cerevisiae (strain ATCC 204508 / S288c) (Baker's yeast).